A 386-amino-acid chain; its full sequence is 3-ketosteroid-9-alpha-monooxygenase, oxygenase component (386 aa).

In terms of domain architecture, Rieske spans W26–V128. [2Fe-2S] cluster-binding residues include C67, H69, C86, and H89. The Fe cation site is built by N175, H181, H186, and D304.

In terms of assembly, homotrimer. The two-component system 3-ketosteroid-9-alpha-monooxygenase is composed of an oxygenase component KshA and a reductase component KshB. [2Fe-2S] cluster is required as a cofactor. Fe cation serves as cofactor.

It catalyses the reaction androsta-1,4-diene-3,17-dione + 2 reduced [2Fe-2S]-[ferredoxin] + O2 + 2 H(+) = 9alpha-hydroxyandrosta-1,4-diene-3,17-dione + 2 oxidized [2Fe-2S]-[ferredoxin] + H2O. The enzyme catalyses androst-4-ene-3,17-dione + NADH + O2 + H(+) = 9alpha-hydroxy-androst-4-ene-3,17-dione + NAD(+) + H2O. The catalysed reaction is 3-oxochol-4-en-22-oate + NADH + O2 + H(+) = 9alpha-hydroxy-3-oxochol-4-en-22-oate + NAD(+) + H2O. It carries out the reaction 3-oxochola-1,4-dien-22-oate + NADH + O2 + H(+) = 9alpha-hydroxy-3-oxochola-1,4-dien-22-oate + NAD(+) + H2O. It catalyses the reaction 3-oxochol-4-en-22-oyl-CoA + NADH + O2 + H(+) = 9alpha-hydroxy-3-oxochol-4-en-22-oyl-CoA + NAD(+) + H2O. The enzyme catalyses 3-oxochola-1,4-dien-22-oyl-CoA + NADH + O2 + H(+) = 9alpha-hydroxy-3-oxochola-1,4-dien-22-oyl-CoA + NAD(+) + H2O. Its pathway is lipid metabolism; steroid biosynthesis. Its function is as follows. Involved in the degradation of cholesterol. Catalyzes the introduction of a 9a-hydroxyl moiety into 1,4-androstadiene-3,17-dione (ADD) to yield the 9alpha-hydroxy-1,4-androstadiene-3,17-dione (9OHADD) intermediate which spontaneously form 3-hydroxy-9,10-seconandrost-1,3,5(10)-triene-9,17-dione (HSA) via the meta-cleavage of ring B with concomitant aromatization of ring A. KSH is also able to use 4-androstene-3,17-dione (AD), 3-oxo-23,24-bisnorcholesta-4-en-22-oate (4-BNC), 3-oxo-23,24-bisnorcholesta-1,4-dien-22-oate (1,4-BNC), 3-oxo-23,24-bisnorcholesta-4-en-22-oyl-coenzyme A thioester (4-BNC-CoA) and 3-oxo-23,24-bisnorcholesta-1,4-dien-22-oyl-coenzyme A thioester (1,4-BNC-CoA) as substrates. The protein is 3-ketosteroid-9-alpha-monooxygenase, oxygenase component (kshA) of Mycobacterium tuberculosis (strain ATCC 25618 / H37Rv).